Reading from the N-terminus, the 854-residue chain is DNA mismatch repair protein MutS (854 aa).

Position 608–615 (608–615 (GPNMAGKS)) interacts with ATP.

It belongs to the DNA mismatch repair MutS family.

Functionally, this protein is involved in the repair of mismatches in DNA. It is possible that it carries out the mismatch recognition step. This protein has a weak ATPase activity. The polypeptide is DNA mismatch repair protein MutS (Leuconostoc mesenteroides subsp. mesenteroides (strain ATCC 8293 / DSM 20343 / BCRC 11652 / CCM 1803 / JCM 6124 / NCDO 523 / NBRC 100496 / NCIMB 8023 / NCTC 12954 / NRRL B-1118 / 37Y)).